A 451-amino-acid chain; its full sequence is UPF0210 protein Asuc_1169 (451 aa).

This sequence belongs to the UPF0210 family. In terms of assembly, homodimer.

This Actinobacillus succinogenes (strain ATCC 55618 / DSM 22257 / CCUG 43843 / 130Z) protein is UPF0210 protein Asuc_1169.